The chain runs to 262 residues: MYFAVIGAHVRGKSASPAMHTASFKALGINAVYIAVDVPKEELGCFAQIARLNFRGFNVTIPHKEEVVKFLDALSAEARAIGAVNTVLVERNLMVGYNTDAHAVYKLAGGHMEGAEVLILGAGGAARAALFAAIKAGAKKIYVKNRTAERAEALAREFREKFERPIEAIPWSGAVKADVVINATPIHDAVIADLTGASLYVEFVYTPTPRTKMVEEAERLGVKVVDGVDLLVEQGAQAEKIWLGVEPDRAVMKKAVLEFLGL.

Residues 14–16 and Thr60 each bind shikimate; that span reads SAS. The Proton acceptor role is filled by Lys64. Residues Asn85 and Asp100 each coordinate shikimate. NADP(+) is bound by residues 121 to 125, 145 to 150, and Phe203; these read GAGGA and NRTAER. Tyr205 serves as a coordination point for shikimate. Gly227 contacts NADP(+).

It belongs to the shikimate dehydrogenase family. As to quaternary structure, homodimer.

It carries out the reaction shikimate + NADP(+) = 3-dehydroshikimate + NADPH + H(+). It functions in the pathway metabolic intermediate biosynthesis; chorismate biosynthesis; chorismate from D-erythrose 4-phosphate and phosphoenolpyruvate: step 4/7. In terms of biological role, involved in the biosynthesis of the chorismate, which leads to the biosynthesis of aromatic amino acids. Catalyzes the reversible NADPH linked reduction of 3-dehydroshikimate (DHSA) to yield shikimate (SA). This Pyrobaculum aerophilum (strain ATCC 51768 / DSM 7523 / JCM 9630 / CIP 104966 / NBRC 100827 / IM2) protein is Shikimate dehydrogenase (NADP(+)).